The sequence spans 445 residues: Tubulin beta-2 chain (445 aa).

GTP is bound by residues Q12, E73, S142, G146, T147, G148, N208, and N230. E73 provides a ligand contact to Mg(2+).

The protein belongs to the tubulin family. Dimer of alpha and beta chains. A typical microtubule is a hollow water-filled tube with an outer diameter of 25 nm and an inner diameter of 15 nM. Alpha-beta heterodimers associate head-to-tail to form protofilaments running lengthwise along the microtubule wall with the beta-tubulin subunit facing the microtubule plus end conferring a structural polarity. Microtubules usually have 13 protofilaments but different protofilament numbers can be found in some organisms and specialized cells. Mg(2+) serves as cofactor.

It localises to the cytoplasm. The protein resides in the cytoskeleton. Functionally, tubulin is the major constituent of microtubules, a cylinder consisting of laterally associated linear protofilaments composed of alpha- and beta-tubulin heterodimers. Microtubules grow by the addition of GTP-tubulin dimers to the microtubule end, where a stabilizing cap forms. Below the cap, tubulin dimers are in GDP-bound state, owing to GTPase activity of alpha-tubulin. The protein is Tubulin beta-2 chain (TUBB2) of Suillus bovinus (Jersey cow bolete).